Consider the following 378-residue polypeptide: Protein RecA (378 aa).

Glycine 79–threonine 86 serves as a coordination point for ATP.

It belongs to the RecA family.

The protein resides in the cytoplasm. Its function is as follows. Can catalyze the hydrolysis of ATP in the presence of single-stranded DNA, the ATP-dependent uptake of single-stranded DNA by duplex DNA, and the ATP-dependent hybridization of homologous single-stranded DNAs. It interacts with LexA causing its activation and leading to its autocatalytic cleavage. The protein is Protein RecA of Streptococcus equi subsp. zooepidemicus (strain H70).